A 257-amino-acid polypeptide reads, in one-letter code: uncharacterized protein (257 aa).

A helical transmembrane segment spans residues Ile6 to Phe26.

It belongs to the staphylococcal tandem lipoprotein family.

It localises to the cell membrane. This is an uncharacterized protein from Staphylococcus aureus (strain COL).